Consider the following 1094-residue polypeptide: Probable serine/threonine-protein kinase kinX (1094 aa).

Positions 22 to 281 (LDFISEIGSG…QTLKQIKTTL (260 aa)) constitute a Protein kinase domain. Residues 28 to 36 (IGSGGFGKV) and Lys49 contribute to the ATP site. Asp146 functions as the Proton acceptor in the catalytic mechanism. 2 disordered regions span residues 301-884 (TTNG…SVED) and 946-1083 (IKVE…PNNK). Acidic residues predominate over residues 330–344 (YDDDDDDDDDDDDND). Positions 351-373 (SDNSNSNVTLESNSNYNSSTING) are enriched in polar residues. A compositionally biased stretch (low complexity) spans 374-387 (QEQQEQQEQQQQQQ). The span at 393–408 (DEGEIEQDDDNIEVYD) shows a compositional bias: acidic residues. Residues 410–424 (DYQKKLEEHQKELLE) show a composition bias toward basic and acidic residues. 3 stretches are compositionally biased toward acidic residues: residues 433-454 (STDE…EEEQ), 480-496 (DDED…EGDE), and 503-523 (DFDE…DEDE). Composition is skewed to low complexity over residues 526–542 (IQYY…LQKQ) and 564–585 (RQLQ…QHQQ). The span at 587–602 (YDDDDDDDDEEEEEYD) shows a compositional bias: acidic residues. Over residues 603 to 639 (DVIRHDTDSEEESKDKTPLPWDQHFEKQKESENKVEQ) the composition is skewed to basic and acidic residues. Low complexity predominate over residues 650–661 (QETEQQQQQQQQ). Over residues 670–801 (PTKVEDVKVE…EPVEEVKVEE (132 aa)) the composition is skewed to basic and acidic residues. A 40 X 9 AA approximate repeats of V-K-V-E-E-P-V-E-E region spans residues 676-978 (VKVETEEQTK…PVKVEVASPV (303 aa)). Residues 802–816 (PVEEVEAEESVQEPV) show a composition bias toward acidic residues. Basic and acidic residues-rich tracts occupy residues 817–884 (EEVK…SVED) and 946–971 (IKVE…EPVK). Composition is skewed to low complexity over residues 972-985 (VEVA…QPPQ) and 992-1011 (VVST…SNSP). The segment covering 1016-1031 (VKQPQQQEIEVNSTPI) has biased composition (polar residues). Residues 1032-1050 (KQQQQQQQTPTQQTQTPTK) show a composition bias toward low complexity.

Belongs to the protein kinase superfamily. TKL Ser/Thr protein kinase family.

The enzyme catalyses L-seryl-[protein] + ATP = O-phospho-L-seryl-[protein] + ADP + H(+). It carries out the reaction L-threonyl-[protein] + ATP = O-phospho-L-threonyl-[protein] + ADP + H(+). This Dictyostelium discoideum (Social amoeba) protein is Probable serine/threonine-protein kinase kinX (kinX).